The following is a 252-amino-acid chain: Small ribosomal subunit protein eS1A (252 aa).

At A2 the chain carries N-acetylalanine; partial.

It belongs to the eukaryotic ribosomal protein eS1 family. Component of the small ribosomal subunit (SSU). Mature yeast ribosomes consist of a small (40S) and a large (60S) subunit. The 40S small subunit contains 1 molecule of ribosomal RNA (18S rRNA) and at least 33 different proteins. The large 60S subunit contains 3 rRNA molecules (25S, 5.8S and 5S rRNA) and at least 46 different proteins. eS1 interacts directly with uS11 and eS26, which form part of the mRNA exit tunnel.

The protein localises to the cytoplasm. Functionally, component of the ribosome, a large ribonucleoprotein complex responsible for the synthesis of proteins in the cell. The small ribosomal subunit (SSU) binds messenger RNAs (mRNAs) and translates the encoded message by selecting cognate aminoacyl-transfer RNA (tRNA) molecules. The large subunit (LSU) contains the ribosomal catalytic site termed the peptidyl transferase center (PTC), which catalyzes the formation of peptide bonds, thereby polymerizing the amino acids delivered by tRNAs into a polypeptide chain. The nascent polypeptides leave the ribosome through a tunnel in the LSU and interact with protein factors that function in enzymatic processing, targeting, and the membrane insertion of nascent chains at the exit of the ribosomal tunnel. The polypeptide is Small ribosomal subunit protein eS1A (rps101) (Schizosaccharomyces pombe (strain 972 / ATCC 24843) (Fission yeast)).